A 174-amino-acid chain; its full sequence is Large ribosomal subunit protein uL10 (174 aa).

Belongs to the universal ribosomal protein uL10 family. In terms of assembly, part of the ribosomal stalk of the 50S ribosomal subunit. The N-terminus interacts with L11 and the large rRNA to form the base of the stalk. The C-terminus forms an elongated spine to which L12 dimers bind in a sequential fashion forming a multimeric L10(L12)X complex.

Its function is as follows. Forms part of the ribosomal stalk, playing a central role in the interaction of the ribosome with GTP-bound translation factors. In Anaeromyxobacter dehalogenans (strain 2CP-C), this protein is Large ribosomal subunit protein uL10.